We begin with the raw amino-acid sequence, 392 residues long: Metallophosphoesterase 1 (392 aa).

A helical membrane pass occupies residues 25–45; the sequence is KLAALVFAVVLFCEFLIYYLV. Residues D73, D115, N153, H246, H300, and H302 each coordinate a divalent metal cation. A helical membrane pass occupies residues 352–372; sequence DTVLATYCVAAGLLVVLILVH.

Belongs to the metallophosphoesterase superfamily. MPPE1 family. In terms of assembly, interacts with GPI-anchor proteins (via the GPI portion). Interacts with TMED10. Requires Mn(2+) as cofactor.

Its subcellular location is the endoplasmic reticulum-Golgi intermediate compartment membrane. Its function is as follows. Metallophosphoesterase that catalyzes the removal of a side-chain ethanolamine-phosphate (EtNP) from the second mannose of the GPI-anchor protein intermediate. Participates in the glycan remodeling steps of GPI-anchor maturation to allow an efficient transport of GPI-anchor proteins from the endoplasmic reticulum to the Golgi. The protein is Metallophosphoesterase 1 of Ailuropoda melanoleuca (Giant panda).